The chain runs to 443 residues: Ribosomal protein uS12 methylthiotransferase RimO (443 aa).

An MTTase N-terminal domain is found at 1-116 (MKFHLISLGC…IAEYVGKLIA (116 aa)). [4Fe-4S] cluster is bound by residues Cys-10, Cys-45, Cys-79, Cys-154, Cys-158, and Cys-161. Residues 140–370 (STPFFRAWVK…LELQQELSTE (231 aa)) form the Radical SAM core domain. Positions 373–441 (KKYVGTVQKV…QYDLVGGVVS (69 aa)) constitute a TRAM domain.

The protein belongs to the methylthiotransferase family. RimO subfamily. It depends on [4Fe-4S] cluster as a cofactor.

The protein localises to the cytoplasm. The enzyme catalyses L-aspartate(89)-[ribosomal protein uS12]-hydrogen + (sulfur carrier)-SH + AH2 + 2 S-adenosyl-L-methionine = 3-methylsulfanyl-L-aspartate(89)-[ribosomal protein uS12]-hydrogen + (sulfur carrier)-H + 5'-deoxyadenosine + L-methionine + A + S-adenosyl-L-homocysteine + 2 H(+). Catalyzes the methylthiolation of an aspartic acid residue of ribosomal protein uS12. In Desulfotalea psychrophila (strain LSv54 / DSM 12343), this protein is Ribosomal protein uS12 methylthiotransferase RimO.